The primary structure comprises 133 residues: Nickel-responsive regulator (133 aa).

Residues His76, His87, His89, and Cys95 each contribute to the Ni(2+) site.

It belongs to the transcriptional regulatory CopG/NikR family. Homotetramer. Ni(2+) serves as cofactor.

In terms of biological role, transcriptional repressor of the nikABCDE operon. Is active in the presence of excessive concentrations of intracellular nickel. The polypeptide is Nickel-responsive regulator (Escherichia fergusonii (strain ATCC 35469 / DSM 13698 / CCUG 18766 / IAM 14443 / JCM 21226 / LMG 7866 / NBRC 102419 / NCTC 12128 / CDC 0568-73)).